The chain runs to 506 residues: Apolipoprotein N-acyltransferase (506 aa).

Transmembrane regions (helical) follow at residues 26–46 (FAPY…LILI), 66–86 (FASG…MPLA), 89–109 (LFLM…FTWS), 113–133 (FFAK…WLIA), 166–186 (GVEL…YAVI), and 192–212 (MLLI…WDWV). One can recognise a CN hydrolase domain in the interval 225–471 (IQGNVDQNLK…TAVLRAELTP (247 aa)). Glutamate 264 serves as the catalytic Proton acceptor. Lysine 330 is a catalytic residue. Cysteine 382 acts as the Nucleophile in catalysis. The helical transmembrane segment at 479–499 (HQLGSWPLYIWVALSLALAWW) threads the bilayer.

It belongs to the CN hydrolase family. Apolipoprotein N-acyltransferase subfamily.

The protein resides in the cell inner membrane. It carries out the reaction N-terminal S-1,2-diacyl-sn-glyceryl-L-cysteinyl-[lipoprotein] + a glycerophospholipid = N-acyl-S-1,2-diacyl-sn-glyceryl-L-cysteinyl-[lipoprotein] + a 2-acyl-sn-glycero-3-phospholipid + H(+). The protein operates within protein modification; lipoprotein biosynthesis (N-acyl transfer). In terms of biological role, catalyzes the phospholipid dependent N-acylation of the N-terminal cysteine of apolipoprotein, the last step in lipoprotein maturation. The chain is Apolipoprotein N-acyltransferase from Vibrio vulnificus (strain CMCP6).